We begin with the raw amino-acid sequence, 343 residues long: GTPase Obg (343 aa).

Residues 1-159 (MKYIDEVKIQ…FELKLELRVL (159 aa)) form the Obg domain. In terms of domain architecture, OBG-type G spans 160–334 (ADVGLLGLPN…LTYAIMGYLE (175 aa)). GTP is bound by residues 166–173 (GLPNAGKS), 191–195 (FTTLY), 213–216 (DIPG), 284–287 (NKVD), and 315–317 (SAL). Mg(2+)-binding residues include Ser-173 and Thr-193.

The protein belongs to the TRAFAC class OBG-HflX-like GTPase superfamily. OBG GTPase family. As to quaternary structure, monomer. It depends on Mg(2+) as a cofactor.

Its subcellular location is the cytoplasm. In terms of biological role, an essential GTPase which binds GTP, GDP and possibly (p)ppGpp with moderate affinity, with high nucleotide exchange rates and a fairly low GTP hydrolysis rate. Plays a role in control of the cell cycle, stress response, ribosome biogenesis and in those bacteria that undergo differentiation, in morphogenesis control. The protein is GTPase Obg of Nitrosomonas eutropha (strain DSM 101675 / C91 / Nm57).